The chain runs to 104 residues: Large ribosomal subunit protein bL21 (104 aa).

A compositionally biased stretch (basic residues) spans 81–90 (QGYRRHHGHR). The tract at residues 81 to 104 (QGYRRHHGHRQPYTQVKITGISAG) is disordered.

The protein belongs to the bacterial ribosomal protein bL21 family. In terms of assembly, part of the 50S ribosomal subunit. Contacts protein L20.

In terms of biological role, this protein binds to 23S rRNA in the presence of protein L20. The sequence is that of Large ribosomal subunit protein bL21 from Halorhodospira halophila (strain DSM 244 / SL1) (Ectothiorhodospira halophila (strain DSM 244 / SL1)).